A 270-amino-acid chain; its full sequence is NAD(P)H-hydrate epimerase (270 aa).

Residues 25–234 (FQQLMDLMQN…DLLAPEAIYQ (210 aa)) enclose the YjeF N-terminal domain. Residue 73–77 (DNGGQ) participates in (6S)-NADPHX binding. Residues Asn74 and Asp144 each coordinate K(+). (6S)-NADPHX contacts are provided by residues 148–154 (GVGLYGH) and Glu177. Residue Thr180 participates in K(+) binding.

The protein belongs to the NnrE/AIBP family. K(+) serves as cofactor.

It carries out the reaction (6R)-NADHX = (6S)-NADHX. The enzyme catalyses (6R)-NADPHX = (6S)-NADPHX. Catalyzes the epimerization of the S- and R-forms of NAD(P)HX, a damaged form of NAD(P)H that is a result of enzymatic or heat-dependent hydration. This is a prerequisite for the S-specific NAD(P)H-hydrate dehydratase to allow the repair of both epimers of NAD(P)HX. The protein is NAD(P)H-hydrate epimerase of Legionella pneumophila serogroup 1 (strain 2300/99 Alcoy).